The primary structure comprises 464 residues: Rab GDP-dissociation inhibitor (464 aa).

The protein belongs to the Rab GDI family. As to quaternary structure, interacts with the GDP-bound form of Rab GTPase YPT7.

In terms of biological role, regulates the GDP/GTP exchange reaction of YPT7 by inhibiting the dissociation of GDP from it, and the subsequent binding of GTP to YTP7. The chain is Rab GDP-dissociation inhibitor (GDI1) from Pyricularia oryzae (strain 70-15 / ATCC MYA-4617 / FGSC 8958) (Rice blast fungus).